A 500-amino-acid polypeptide reads, in one-letter code: Lysine--tRNA ligase (500 aa).

Residues Glu-410 and Glu-417 each coordinate Mg(2+).

Belongs to the class-II aminoacyl-tRNA synthetase family. Homodimer. Mg(2+) serves as cofactor.

The protein resides in the cytoplasm. The catalysed reaction is tRNA(Lys) + L-lysine + ATP = L-lysyl-tRNA(Lys) + AMP + diphosphate. This Mycoplasma mycoides subsp. mycoides SC (strain CCUG 32753 / NCTC 10114 / PG1) protein is Lysine--tRNA ligase.